Consider the following 259-residue polypeptide: Formate channel BtFdhC (259 aa).

The Cytoplasmic portion of the chain corresponds to methionine 1–proline 26. Residues alanine 27–isoleucine 47 form a helical membrane-spanning segment. Residues arginine 48–glycine 66 are Periplasmic-facing. The helical transmembrane segment at alanine 67–alanine 97 threads the bilayer. Residues lysine 98–asparagine 108 lie on the Cytoplasmic side of the membrane. The helical transmembrane segment at tryptophan 109–leucine 130 threads the bilayer. The Periplasmic portion of the chain corresponds to glycine 131–threonine 157. The helical transmembrane segment at leucine 158–tyrosine 176 threads the bilayer. Topologically, residues glycine 177–glycine 187 are cytoplasmic. The chain crosses the membrane as a helical span at residues isoleucine 188–alanine 216. Residues glycine 217–asparagine 227 lie on the Periplasmic side of the membrane. Residues phenylalanine 228–cysteine 250 form a helical membrane-spanning segment. Residues tyrosine 251 to lysine 259 lie on the Cytoplasmic side of the membrane.

The protein belongs to the FNT transporter (TC 1.A.16) family.

The protein localises to the cell inner membrane. It catalyses the reaction formate(in) = formate(out). Its function is as follows. Acts as a formate transporter. In Bacillus thuringiensis, this protein is Formate channel BtFdhC.